The chain runs to 382 residues: Layilin (382 aa).

Positions 1-21 (MRPGTALQAVLLAVLLVGLRA) are cleaved as a signal peptide. Topologically, residues 22–235 (ATGRLLSASD…SREAALNLAY (214 aa)) are extracellular. Residues 45 to 185 (TQRPCYKVIY…CNMKNNFICK (141 aa)) enclose the C-type lectin domain. Disulfide bonds link cysteine 71–cysteine 184 and cysteine 150–cysteine 176. N-linked (GlcNAc...) asparagine glycosylation occurs at asparagine 117. A helical membrane pass occupies residues 236–256 (ILIPSIPLLLLLVVTTVVCWV). Residues 257-382 (WICRKRKREQ…GWVENEIYGY (126 aa)) are Cytoplasmic-facing. The tract at residues 266 to 285 (QPDPSTKKQHTIWPSPHQGN) is disordered. Phosphoserine occurs at positions 286 and 299. Residues 330–374 (DYDNMAVNPSESGFVTLVSVESGFVTNDIYEFSPDQMGRSKESGW) are interaction with NF2. The interaction with TLN1 stretch occupies residues 337-382 (NPSESGFVTLVSVESGFVTNDIYEFSPDQMGRSKESGWVENEIYGY). 5 tandem repeats follow at residues 340–344 (ESGFV), 350–354 (ESGFV), 356–359 (NDIY), 371–375 (ESGWV), and 377–380 (NEIY). Positions 340–375 (ESGFVTLVSVESGFVTNDIYEFSPDQMGRSKESGWV) are 3 X 5 AA repeats of E-S-G-X-V. Positions 356–380 (NDIYEFSPDQMGRSKESGWVENEIY) are 2 X 4 AA repeats of N-X-I-Y.

In terms of assembly, interacts with NF2, RDX and TLN1.

It is found in the membrane. Its function is as follows. Receptor for hyaluronate. In Homo sapiens (Human), this protein is Layilin (LAYN).